Reading from the N-terminus, the 176-residue chain is Cytochrome b (176 aa).

A run of 3 helical transmembrane segments spans residues 33-53 (FGSLLGICLALQILTGLFLAM), 77-98 (WILRYLHANGASMFFICLYLHV), and 113-133 (WNIGVTPLFAVMATAFMGYVL). Positions 83 and 97 each coordinate heme b.

Belongs to the cytochrome b family. As to quaternary structure, the cytochrome bc1 complex contains 11 subunits: 3 respiratory subunits (MT-CYB, CYC1 and UQCRFS1), 2 core proteins (UQCRC1 and UQCRC2) and 6 low-molecular weight proteins (UQCRH/QCR6, UQCRB/QCR7, UQCRQ/QCR8, UQCR10/QCR9, UQCR11/QCR10 and a cleavage product of UQCRFS1). This cytochrome bc1 complex then forms a dimer. The cofactor is heme b.

The protein localises to the mitochondrion inner membrane. In terms of biological role, component of the ubiquinol-cytochrome c reductase complex (complex III or cytochrome b-c1 complex) that is part of the mitochondrial respiratory chain. The b-c1 complex mediates electron transfer from ubiquinol to cytochrome c. Contributes to the generation of a proton gradient across the mitochondrial membrane that is then used for ATP synthesis. The protein is Cytochrome b (MT-CYB) of Myotis leibii (Eastern small-footed myotis).